The sequence spans 659 residues: UvrABC system protein B (659 aa).

Residues 27-414 enclose the Helicase ATP-binding domain; it reads EGLEQNKKSQ…AHGEIVKQII (388 aa). 40 to 47 serves as a coordination point for ATP; sequence GVTGSGKT. Positions 93–116 match the Beta-hairpin motif; that stretch reads YFDYYRPEAYMPNTDTYIDKTTKS. The Helicase C-terminal domain maps to 432 to 594; sequence QVEDMFDEIQ…IIPKTIIKPI (163 aa). Residues 624–659 enclose the UVR domain; sequence EALVKDLRNQMLDASKQLNFERAAELRDIILELEAN.

It belongs to the UvrB family. Forms a heterotetramer with UvrA during the search for lesions. Interacts with UvrC in an incision complex.

The protein localises to the cytoplasm. In terms of biological role, the UvrABC repair system catalyzes the recognition and processing of DNA lesions. A damage recognition complex composed of 2 UvrA and 2 UvrB subunits scans DNA for abnormalities. Upon binding of the UvrA(2)B(2) complex to a putative damaged site, the DNA wraps around one UvrB monomer. DNA wrap is dependent on ATP binding by UvrB and probably causes local melting of the DNA helix, facilitating insertion of UvrB beta-hairpin between the DNA strands. Then UvrB probes one DNA strand for the presence of a lesion. If a lesion is found the UvrA subunits dissociate and the UvrB-DNA preincision complex is formed. This complex is subsequently bound by UvrC and the second UvrB is released. If no lesion is found, the DNA wraps around the other UvrB subunit that will check the other stand for damage. This Mycoplasma mobile (strain ATCC 43663 / 163K / NCTC 11711) (Mesomycoplasma mobile) protein is UvrABC system protein B.